Consider the following 183-residue polypeptide: Ribulose bisphosphate carboxylase small subunit, chloroplastic (183 aa).

Residues 1-59 (MASSMISSGTVATVSADRPAPAQARMVAPFTGLKSSSASPVTRKSNDITSIASNGGRVQ) constitute a chloroplast transit peptide.

The protein belongs to the RuBisCO small chain family. As to quaternary structure, heterohexadecamer of 8 large and 8 small subunits.

The protein localises to the plastid. It localises to the chloroplast. In terms of biological role, ruBisCO catalyzes two reactions: the carboxylation of D-ribulose 1,5-bisphosphate, the primary event in carbon dioxide fixation, as well as the oxidative fragmentation of the pentose substrate. Both reactions occur simultaneously and in competition at the same active site. Although the small subunit is not catalytic it is essential for maximal activity. The protein is Ribulose bisphosphate carboxylase small subunit, chloroplastic of Malus sp. (Crab apple).